The following is a 265-amino-acid chain: Early E4 31 kDa protein (265 aa).

It belongs to the adenoviridae E4 30 to 34 kDa protein family. In terms of assembly, interacts with E1B-55k.

The protein resides in the host nucleus. It localises to the host cytoplasm. Plays a major role to prevent cellular inhibition of viral genome replication by nuclear bodies. Assembles an SCF-like E3 ubiquitin ligase complex based on the cellular proteins ELOB, ELOC, CUL5 and RBX1, in cooperation with viral E1B-55K. This viral RING-type ligase ubiquitinates cellular substrates prior to proteasomal degradation: p53/TP53, LIG4, MRE11-RAD50-NBS1 (MRN) complex, ITGA3, DAXX and BLM. This Canis lupus familiaris (Dog) protein is Early E4 31 kDa protein.